The chain runs to 274 residues: Leucyl/phenylalanyl-tRNA--protein transferase (274 aa).

This sequence belongs to the L/F-transferase family.

Its subcellular location is the cytoplasm. The enzyme catalyses N-terminal L-lysyl-[protein] + L-leucyl-tRNA(Leu) = N-terminal L-leucyl-L-lysyl-[protein] + tRNA(Leu) + H(+). It catalyses the reaction N-terminal L-arginyl-[protein] + L-leucyl-tRNA(Leu) = N-terminal L-leucyl-L-arginyl-[protein] + tRNA(Leu) + H(+). The catalysed reaction is L-phenylalanyl-tRNA(Phe) + an N-terminal L-alpha-aminoacyl-[protein] = an N-terminal L-phenylalanyl-L-alpha-aminoacyl-[protein] + tRNA(Phe). In terms of biological role, functions in the N-end rule pathway of protein degradation where it conjugates Leu, Phe and, less efficiently, Met from aminoacyl-tRNAs to the N-termini of proteins containing an N-terminal arginine or lysine. The polypeptide is Leucyl/phenylalanyl-tRNA--protein transferase (Psychrobacter cryohalolentis (strain ATCC BAA-1226 / DSM 17306 / VKM B-2378 / K5)).